The sequence spans 259 residues: Expansin-B4 (259 aa).

Residues 1-23 form the signal peptide; the sequence is MASSQRYFALLALFAVSLKFCYC. An N-linked (GlcNAc...) asparagine glycan is attached at asparagine 25. The Expansin-like EG45 domain occupies 51-161; it reads GGACGYGSAV…KRAACLYRGT (111 aa). 3 disulfides stabilise this stretch: cysteine 54-cysteine 83, cysteine 86-cysteine 156, and cysteine 91-cysteine 97. One can recognise an Expansin-like CBD domain in the interval 174–255; that stretch reads YYISFVVEYE…NWKPDESYRS (82 aa).

This sequence belongs to the expansin family. Expansin B subfamily.

It is found in the secreted. It localises to the cell wall. The protein resides in the membrane. May cause loosening and extension of plant cell walls by disrupting non-covalent bonding between cellulose microfibrils and matrix glucans. No enzymatic activity has been found. The sequence is that of Expansin-B4 (EXPB4) from Arabidopsis thaliana (Mouse-ear cress).